The sequence spans 232 residues: Flagellar L-ring protein (232 aa).

Residues 1–21 form the signal peptide; it reads MQKNAAHTYAISSLLVLSLTG. Residue Cys22 is the site of N-palmitoyl cysteine attachment. Residue Cys22 is the site of S-diacylglycerol cysteine attachment.

Belongs to the FlgH family. In terms of assembly, the basal body constitutes a major portion of the flagellar organelle and consists of four rings (L,P,S, and M) mounted on a central rod.

The protein localises to the cell outer membrane. Its subcellular location is the bacterial flagellum basal body. Its function is as follows. Assembles around the rod to form the L-ring and probably protects the motor/basal body from shearing forces during rotation. The polypeptide is Flagellar L-ring protein (Shigella boydii serotype 18 (strain CDC 3083-94 / BS512)).